The sequence spans 397 residues: Oxysterol-binding protein homolog C354.07c (397 aa).

Residues asparagine 186 and asparagine 195 are each glycosylated (N-linked (GlcNAc...) asparagine).

Belongs to the OSBP family.

It localises to the endoplasmic reticulum. This is Oxysterol-binding protein homolog C354.07c from Schizosaccharomyces pombe (strain 972 / ATCC 24843) (Fission yeast).